Reading from the N-terminus, the 371-residue chain is Cytochrome b (371 aa).

4 consecutive transmembrane segments (helical) span residues 25-45 (FGSM…FLAV), 69-90 (WMMQ…YIHI), 105-125 (WMSG…GYVL), and 170-190 (FFAL…LHII). Histidine 75 and histidine 89 together coordinate heme b. Heme b contacts are provided by histidine 174 and histidine 188. An a ubiquinone-binding site is contributed by histidine 193. A run of 4 helical transmembrane segments spans residues 218-238 (HKDL…SSFF), 280-300 (LGGA…PFTH), 312-332 (LSQL…WAAT), and 339-358 (FIVI…LSTP).

Belongs to the cytochrome b family. As to quaternary structure, the cytochrome bc1 complex contains 3 respiratory subunits (MT-CYB, CYC1 and UQCRFS1), 2 core proteins (UQCRC1 and UQCRC2) and probably 6 low-molecular weight proteins. Requires heme b as cofactor.

The protein resides in the mitochondrion inner membrane. Its function is as follows. Component of the ubiquinol-cytochrome c reductase complex (complex III or cytochrome b-c1 complex) that is part of the mitochondrial respiratory chain. The b-c1 complex mediates electron transfer from ubiquinol to cytochrome c. Contributes to the generation of a proton gradient across the mitochondrial membrane that is then used for ATP synthesis. In Aspidites melanocephalus (Black-headed python), this protein is Cytochrome b (MT-CYB).